Here is a 565-residue protein sequence, read N- to C-terminus: DNA primase (565 aa).

The CHC2-type zinc-finger motif lies at 37–61 (CPFHSETNPSFYVHPGLKIYHCFGC). Residues 248-329 (GFFVITEGYF…NVLVATPSPY (82 aa)) enclose the Toprim domain. Residues Glu-254, Asp-298, and Asp-300 each contribute to the Mg(2+) site.

The protein belongs to the DnaG primase family. In terms of assembly, monomer. Interacts with DnaB. It depends on Zn(2+) as a cofactor. Mg(2+) serves as cofactor.

It carries out the reaction ssDNA + n NTP = ssDNA/pppN(pN)n-1 hybrid + (n-1) diphosphate.. RNA polymerase that catalyzes the synthesis of short RNA molecules used as primers for DNA polymerase during DNA replication. This Thermotoga maritima (strain ATCC 43589 / DSM 3109 / JCM 10099 / NBRC 100826 / MSB8) protein is DNA primase.